Reading from the N-terminus, the 401-residue chain is Dual-specificity RNA methyltransferase RlmN (401 aa).

Glutamate 114 functions as the Proton acceptor in the catalytic mechanism. The region spanning 120–365 (DKGRGTLCVS…TMVRRTRGDD (246 aa)) is the Radical SAM core domain. Cysteine 127 and cysteine 370 are oxidised to a cystine. [4Fe-4S] cluster is bound by residues cysteine 134, cysteine 138, and cysteine 141. S-adenosyl-L-methionine-binding positions include 187 to 188 (GE), serine 219, 241 to 243 (SLH), and asparagine 327. Residue cysteine 370 is the S-methylcysteine intermediate of the active site.

This sequence belongs to the radical SAM superfamily. RlmN family. [4Fe-4S] cluster is required as a cofactor.

The protein localises to the cytoplasm. The catalysed reaction is adenosine(2503) in 23S rRNA + 2 reduced [2Fe-2S]-[ferredoxin] + 2 S-adenosyl-L-methionine = 2-methyladenosine(2503) in 23S rRNA + 5'-deoxyadenosine + L-methionine + 2 oxidized [2Fe-2S]-[ferredoxin] + S-adenosyl-L-homocysteine. It catalyses the reaction adenosine(37) in tRNA + 2 reduced [2Fe-2S]-[ferredoxin] + 2 S-adenosyl-L-methionine = 2-methyladenosine(37) in tRNA + 5'-deoxyadenosine + L-methionine + 2 oxidized [2Fe-2S]-[ferredoxin] + S-adenosyl-L-homocysteine. Specifically methylates position 2 of adenine 2503 in 23S rRNA and position 2 of adenine 37 in tRNAs. m2A2503 modification seems to play a crucial role in the proofreading step occurring at the peptidyl transferase center and thus would serve to optimize ribosomal fidelity. In Xanthomonas axonopodis pv. citri (strain 306), this protein is Dual-specificity RNA methyltransferase RlmN.